Here is a 312-residue protein sequence, read N- to C-terminus: tRNA pseudouridine synthase B (312 aa).

Residue Asp-47 is the Nucleophile of the active site.

The protein belongs to the pseudouridine synthase TruB family. Type 1 subfamily.

It catalyses the reaction uridine(55) in tRNA = pseudouridine(55) in tRNA. Its function is as follows. Responsible for synthesis of pseudouridine from uracil-55 in the psi GC loop of transfer RNAs. In Vibrio cholerae serotype O1 (strain M66-2), this protein is tRNA pseudouridine synthase B.